The following is an 805-amino-acid chain: Na(+)/H(+) antiporter subunit A (805 aa).

21 helical membrane passes run 4-22 (LHWA…PFLY), 29-51 (HTGW…YLSI), 80-102 (SLLF…IFYL), 109-128 (LNNF…GVVL), 132-154 (LIVL…SYWF), 167-189 (MLIT…VMTG), 209-231 (FLPA…PFHI), 244-266 (SAYL…LTPV), 271-293 (AEWF…TSAV), 300-322 (GILA…LGSA), 332-354 (PAFY…TFKG), 375-397 (LGGL…ASMA), 431-453 (IIIV…IMFF), 474-496 (IGML…FPNI), 529-551 (GFNA…FLMM), 597-614 (YFAY…YTMF), 629-651 (IAPY…PFIN), 656-674 (AVVV…FVVF), 679-701 (LALT…FYHL), 714-736 (NVLN…LSSL), and 778-795 (MLEV…IALI).

The protein belongs to the CPA3 antiporters (TC 2.A.63) subunit A family. In terms of assembly, forms a heterooligomeric complex that consists of seven subunits: MrpA, MrpB, MrpC, MrpD, MrpE, MrpF and MrpG.

It is found in the cell membrane. Functionally, mnh complex is a Na(+)Li(+)/H(+) antiporter involved in Na(+) and/or Li(+) excretion and Na(+) resistance. Na(+)/H(+) antiport consumes a transmembrane electrical potential, and is thus inferred to be electrogenic. Does not transport K(+), Ca(2+) or Mg(2+). This chain is Na(+)/H(+) antiporter subunit A (mrpA), found in Alkalihalophilus pseudofirmus (strain ATCC BAA-2126 / JCM 17055 / OF4) (Bacillus pseudofirmus).